Reading from the N-terminus, the 428-residue chain is Proteinase-activated receptor 1 (428 aa).

An N-terminal signal peptide occupies residues 1–21 (MGPQRLLLVAAGLSLCGPLLS). A propeptide spans 22 to 41 (SRVPVRQPESEMTDATVNPR) (removed for receptor activation). At 42 to 105 (SFFLRNPGEN…SGYLTSPWLR (64 aa)) the chain is on the extracellular side. 2 N-linked (GlcNAc...) asparagine glycosylation sites follow: Asn-65 and Asn-78. Residues 106–131 (LFIPSVYTFVFVVSLPLNILAIAVFV) form a helical membrane-spanning segment. Residues 132–140 (LKMKVKKPA) are Cytoplasmic-facing. The helical transmembrane segment at 141–160 (VVYMLHLAMADVLFVSVLPL) threads the bilayer. The Extracellular segment spans residues 161–179 (KISYYFSGSDWQFGSGMCR). Residues Cys-178 and Cys-257 are joined by a disulfide bond. The helical transmembrane segment at 180-201 (FATAAFYCNMYASIMLMTVISI) threads the bilayer. Residues 202–221 (DRFLAVVYPIQSLSWRTLGR) lie on the Cytoplasmic side of the membrane. Residues 222–242 (ANFTCLVIWVMAIMGVVPLLL) traverse the membrane as a helical segment. The Extracellular segment spans residues 243 to 271 (KEQTTRVPGLNITTCHDVLNETLLQGFYS). Asn-253 and Asn-262 each carry an N-linked (GlcNAc...) asparagine glycan. Residues 272 to 291 (YYFSAFSAVFFLVPLIISTI) traverse the membrane as a helical segment. At 292–314 (CYMSIIRCLSSSSVANRSKKSRA) the chain is on the cytoplasmic side. The chain crosses the membrane as a helical span at residues 315–337 (LFLSAAVFCVFIVCFGPTNVLLI). The Extracellular portion of the chain corresponds to 338 to 352 (MHYLLLSDSPATEKA). The chain crosses the membrane as a helical span at residues 353–377 (YFAYLLCVCVSSVSCCIDPLIYYYA). The Cytoplasmic segment spans residues 378–428 (SSECQRHLYGILCCKESSDPNSYNSTGQLMPSKMDTCSSHLNNSIYKKLLA). Ser-421 is modified (phosphoserine).

Belongs to the G-protein coupled receptor 1 family. Post-translationally, proteolytic cleavage by thrombin generates a new N-terminus that functions as a tethered ligand. Also proteolytically cleaved by cathepsin CTSG. Phosphorylated in the C-terminal tail; probably mediating desensitization prior to the uncoupling and internalization of the receptor.

It is found in the cell membrane. In terms of biological role, high affinity receptor that binds the activated thrombin, leading to calcium release from intracellular stores. The thrombin-activated receptor signaling pathway is mediated through PTX-insensitive G proteins, activation of phospholipase C resulting in the production of 1D-myo-inositol 1,4,5-trisphosphate (InsP3) which binds to InsP3 receptors causing calcium release from the stores. In astrocytes, the calcium released into the cytosol allows the Ca(2+)-dependent release of L-glutamate into the synaptic cleft through BEST1, that targets the neuronal postsynaptic GRIN2A/NMDAR receptor resulting in the synaptic plasticity regulation. May play a role in platelets activation and in vascular development. Mediates up-regulation of pro-inflammatory cytokines, such as MCP-1/CCL2 and IL6, triggered by coagulation factor Xa (F10) in cardiac fibroblasts and umbilical vein endothelial cells. This chain is Proteinase-activated receptor 1, found in Cricetulus longicaudatus (Long-tailed dwarf hamster).